A 456-amino-acid polypeptide reads, in one-letter code: Putative dihydroorotase (456 aa).

It belongs to the metallo-dependent hydrolases superfamily. DHOase family. Class I DHOase subfamily.

The enzyme catalyses (S)-dihydroorotate + H2O = N-carbamoyl-L-aspartate + H(+). It functions in the pathway pyrimidine metabolism; UMP biosynthesis via de novo pathway; (S)-dihydroorotate from bicarbonate: step 3/3. In terms of biological role, catalyzes the reversible cyclization of carbamoyl aspartate to dihydroorotate. The sequence is that of Putative dihydroorotase from Rhodopirellula baltica (strain DSM 10527 / NCIMB 13988 / SH1).